The primary structure comprises 396 residues: Cell adhesion molecule 3 (396 aa).

The N-terminal stretch at 1–22 (MGAPSALPLLLLLACSWAPGGA) is a signal peptide. The 102-residue stretch at 23-124 (NLSQDDSQPW…VRTAKSLVTV (102 aa)) folds into the Ig-like V-type domain. Residues 23-328 (NLSQDDSQPW…PVPSSSSTYH (306 aa)) are Extracellular-facing. 3 disulfide bridges follow: C48-C108, C150-C207, and C252-C297. Ig-like C2-type domains follow at residues 128-226 (PQKP…QRIE) and 231-313 (PTAM…FTLN). Residue N288 is glycosylated (N-linked (GlcNAc...) asparagine). The helical transmembrane segment at 329-349 (AIIGGIVAFIVFLLLILLIFL) threads the bilayer. Residues 350-396 (GHYLIRHKGTYLTHEAKGSDDAPDADTAIINAEGGQSGGDDKKEYFI) lie on the Cytoplasmic side of the membrane. The interval 365 to 396 (AKGSDDAPDADTAIINAEGGQSGGDDKKEYFI) is disordered. Position 386 is a phosphoserine (S386).

Belongs to the nectin family. As to quaternary structure, homodimer. Can form trans-heterodimers with NECTIN3. Interacts with EPB41L1, DLG3, PALS2 and CASK.

It localises to the cell membrane. Its subcellular location is the cell junction. Its function is as follows. Involved in cell-cell adhesion. Has both calcium-independent homophilic cell-cell adhesion activity and calcium-independent heterophilic cell-cell adhesion activity with IGSF4, NECTIN1 and NECTIN3. Interaction with EPB41L1 may regulate structure or function of cell-cell junctions. The chain is Cell adhesion molecule 3 (Cadm3) from Rattus norvegicus (Rat).